The sequence spans 312 residues: uncharacterized protein (312 aa).

Catalysis depends on charge relay system residues serine 200, aspartate 261, and histidine 292.

This sequence belongs to the AB hydrolase superfamily. AB hydrolase 2 family.

This is an uncharacterized protein from Acanthamoeba polyphaga mimivirus (APMV).